The sequence spans 249 residues: UPF0246 protein Lreu_0493 (249 aa).

Belongs to the UPF0246 family.

In Limosilactobacillus reuteri (strain DSM 20016) (Lactobacillus reuteri), this protein is UPF0246 protein Lreu_0493.